The following is a 1078-amino-acid chain: MAFYSCCWVLLALTWHTSAYGPDQRAQKKGDIILGGLFPIHFGVAAKDQDLKSRPESVECIRYNFRGFRWLQAMIFAIEEINSSPALLPNLTLGYRIFDTCNTVSKALEATLSFVAQNKIDSLNLDEFCNCSEHIPSTIAVVGATGSGVSTAVANLLGLFYIPQVSYASSSRLLSNKNQFKSFLRTIPNDEHQATAMADIIEYFRWNWVGTIAADDDYGRPGIEKFREEAEERDICIDFSELISQYSDEEEIQHVVEVIQNSTAKVIVVFSSGPDLEPLIKEIVRRNITGKIWLASEAWASSSLIAMPQYFHVVGGTIGFALKAGQIPGFREFLKKVHPRKSVHNGFAKEFWEETFNCHLQEGAKGPLPVDTFLRGHEESGDRFSNSSTAFRPLCTGDENISSVETPYIDYTHLRISYNVYLAVYSIAHALQDIYTCLPGRGLFTNGSCADIKKVEAWQVLKHLRHLNFTNNMGEQVTFDECGDLVGNYSIINWHLSPEDGSIVFKEVGYYNVYAKKGERLFINEEKILWSGFSREVPFSNCSRDCLAGTRKGIIEGEPTCCFECVECPDGEYSDETDASACNKCPDDFWSNENHTSCIAKEIEFLSWTEPFGIALTLFAVLGIFLTAFVLGVFIKFRNTPIVKATNRELSYLLLFSLLCCFSSSLFFIGEPQDWTCRLRQPAFGISFVLCISCILVKTNRVLLVFEAKIPTSFHRKWWGLNLQFLLVFLCTFMQIVICVIWLYTAPPSSYRNQELEDEIIFITCHEGSLMALGFLIGYTCLLAAICFFFAFKSRKLPENFNEAKFITFSMLIFFIVWISFIPAYASTYGKFVSAVEVIAILAASFGLLACIFFNKIYIILFKPSRNTIEEVRCSTAAHAFKVAARATLRRSNVSRKRSSSLGGSTGSTPSSSISSKSNSEDPFPQPERQKQQQPLALTQQEQQQQPLTLPQQQRSQQQPRCKQKVIFGSGTVTFSLSFDEPQKNAMAHRNSTHQNSLEAQKSSDTLTRHEPLLPLQCGETDLDLTVQETGLQGPVGGDQRPEVEDPEELSPALVVSSSQSFVISGGGSTVTENVVNS.

Positions 1–19 (MAFYSCCWVLLALTWHTSA) are cleaved as a signal peptide. Residues 20–610 (YGPDQRAQKK…KEIEFLSWTE (591 aa)) lie on the Extracellular side of the membrane. The interval 22–188 (PDQRAQKKGD…QFKSFLRTIP (167 aa)) is ligand-binding 1 (LB1). The cysteines at positions 60 and 101 are disulfide-linked. 66–70 (RGFRW) is a binding site for phosphate. Residues Ile-81, Ser-84, Leu-87, and Leu-88 each contribute to the Ca(2+) site. Residue Asn-90 is glycosylated (N-linked (GlcNAc...) asparagine). Residue Thr-100 coordinates Ca(2+). An N-linked (GlcNAc...) asparagine glycan is attached at Asn-130. A Ca(2+)-binding site is contributed by Thr-145. Positions 147, 168, and 170 each coordinate L-tryptophan. Positions 170, 188, 190, 231, and 234 each coordinate Ca(2+). A ligand-binding 2 (LB2) region spans residues 189–324 (NDEHQATAMA…GGTIGFALKA (136 aa)). 7 cysteine pairs are disulfide-bonded: Cys-236–Cys-561, Cys-358–Cys-395, Cys-437–Cys-449, Cys-542–Cys-562, Cys-546–Cys-565, Cys-568–Cys-582, and Cys-585–Cys-598. Positions 238 and 240 each coordinate spermine. N-linked (GlcNAc...) asparagine glycosylation is found at Asn-261 and Asn-287. Glu-297 contacts Ca(2+). Position 297 (Glu-297) interacts with L-tryptophan. Asn-386 and Asn-400 each carry an N-linked (GlcNAc...) asparagine glycan. 415-417 (RIS) lines the phosphate pocket. Asn-446, Asn-468, and Asn-488 each carry an N-linked (GlcNAc...) asparagine glycan. Residue Tyr-489 coordinates Ca(2+). N-linked (GlcNAc...) asparagine glycosylation is present at Asn-541. The tract at residues 542 to 612 (CSRDCLAGTR…IEFLSWTEPF (71 aa)) is cysteine-rich (CR). Residue Gly-557 coordinates Ca(2+). An N-linked (GlcNAc...) asparagine glycan is attached at Asn-594. Residues 611-636 (PFGIALTLFAVLGIFLTAFVLGVFIK) traverse the membrane as a helical segment. The Cytoplasmic segment spans residues 637–648 (FRNTPIVKATNR). The intracellular loop 1 (ICL1) stretch occupies residues 637–648 (FRNTPIVKATNR). Residues 649–668 (ELSYLLLFSLLCCFSSSLFF) form a helical membrane-spanning segment. Over 669–674 (IGEPQD) the chain is Extracellular. The chain crosses the membrane as a helical span at residues 675–698 (WTCRLRQPAFGISFVLCISCILVK). At 699–722 (TNRVLLVFEAKIPTSFHRKWWGLN) the chain is on the cytoplasmic side. Residues 699 to 722 (TNRVLLVFEAKIPTSFHRKWWGLN) are intracellular loop 2 (ICL2). Residues 723–745 (LQFLLVFLCTFMQIVICVIWLYT) traverse the membrane as a helical segment. Residues 746 to 769 (APPSSYRNQELEDEIIFITCHEGS) are Extracellular-facing. A helical membrane pass occupies residues 770–789 (LMALGFLIGYTCLLAAICFF). At 790 to 805 (FAFKSRKLPENFNEAK) the chain is on the cytoplasmic side. Residues 790–805 (FAFKSRKLPENFNEAK) are intracellular loop 3 (ICL3). A helical transmembrane segment spans residues 806-828 (FITFSMLIFFIVWISFIPAYAST). The Extracellular portion of the chain corresponds to 829-832 (YGKF). The chain crosses the membrane as a helical span at residues 833-854 (VSAVEVIAILAASFGLLACIFF). The Cytoplasmic segment spans residues 855-1078 (NKIYIILFKP…STVTENVVNS (224 aa)). Residues 855–1078 (NKIYIILFKP…STVTENVVNS (224 aa)) are C-terminus. Positions 880–900 (AFKVAARATLRRSNVSRKRSS) are interaction with RNF19A. Thr-888 carries the phosphothreonine; by PKC modification. The interval 890-898 (RRSNVSRKR) is arginine-rich retention motif. The residue at position 892 (Ser-892) is a Phosphoserine; by PKC. 3 disordered regions span residues 892-963 (SNVS…PRCK), 986-1006 (AMAH…SSDT), and 1030-1055 (TGLQ…PALV). Ser-899 carries the post-translational modification Phosphoserine; by PKA. Low complexity predominate over residues 900–918 (SSLGGSTGSTPSSSISSKS). A Phosphoserine modification is found at Ser-920. Over residues 932-960 (QQQPLALTQQEQQQQPLTLPQQQRSQQQP) the composition is skewed to low complexity. Polar residues predominate over residues 993 to 1006 (THQNSLEAQKSSDT). Position 1061 is a phosphoserine (Ser-1061).

It belongs to the G-protein coupled receptor 3 family. Homodimer; disulfide-linked. Interacts with VCP. Interacts with ARRB1. Phosphorylation at Thr-888 by PKC impairs coupling with G(q)/G(11) G-proteins, while it does not affect G(i)/G(o)-coupling. Phosphorylation at Ser-892 by PKC and Ser-899 by PKA promote plasma membrane localization. In terms of processing, ubiquitinated by RNF19A; which induces proteasomal degradation. Post-translationally, N-glycosylated. In terms of tissue distribution, expressed in the temporal lobe, frontal lobe, parietal lobe, hippocampus, and cerebellum. Also found in kidney, lung, liver, heart, skeletal muscle, placenta.

The protein resides in the cell membrane. Its activity is regulated as follows. In resting state, adopts an open conformation, anion-binding promoting the inactive configuration. Upon aromatic amino acid-binding, the groove in the extracellular venus flytrap module is closed, thereby inducing the formation of a novel homodimer interface between subunits. Calcium ions stabilize the active state by enhancing homodimer interactions between membrane-proximal domains to fully activate the receptor. Upon activation, the homodimer adopts an asymmetric configuration of the 7-transmembrane region that primes one protomer for G-protein coupling. G-protein binding expands the transmembrane dimer interface; the restriction imposed by the receptor dimer, in combination with intracellular loop 2 (ICL2), enables G-protein activation by facilitating conformational transition of G-protein alpha. Coupling to different classes of G-proteins results in distinct CASR-G-protein interfaces. Activated by glucose, which acts as a positive allosteric modulator. Activated by positive allosteric modulator drugs cinacalcet, evocalcet and etelcalcetide, which are clinically used for the treatment of hyperparathyroidism and familial hypocalciuric hypercalcemia. Inhibited by NPS-2143, a negative allosteric modulator tested for the treatment of hypocalcemia. Activated by velcalcetide (AMG 416), a D-amino acid-containing peptide agonist that is being evaluated for the treatment of secondary hyperparathyroidism in chronic kidney disease patients receiving hemodialysis. Velcalcetide agonist acts by forming a disulfide bond with Cys-482. Functionally, G-protein-coupled receptor that senses changes in the extracellular concentration of calcium ions and plays a key role in maintaining calcium homeostasis. Senses fluctuations in the circulating calcium concentration: activated by elevated circulating calcium, leading to decreased parathyroid hormone (PTH) secretion in parathyroid glands. In kidneys, acts as a key regulator of renal tubular calcium resorption. Ligand binding causes a conformation change that triggers signaling via guanine nucleotide-binding proteins (G-proteins) and modulates the activity of downstream effectors. CASR is coupled with different G(q)/G(11), G(i)/G(o)- or G(s)-classes of G-proteins depending on the context. In the parathyroid and kidney, CASR signals through G(q)/G(11) and G(i)/G(o) G-proteins: G(q)/G(11) coupling activates phospholipase C-beta, releasing diacylglycerol (DAG) and inositol 1,4,5-trisphosphate (IP3) second messengers, while G(i)/G(o) coupling mediates inhibition of adenylate cyclase activity. The G-protein-coupled receptor activity is activated by a co-agonist mechanism: aromatic amino acids, such as Trp or Phe, act concertedly with divalent cations, such as calcium or magnesium, to achieve full receptor activation. Acts as an activator of the NLRP3 inflammasome via G(i)/G(o)-mediated signaling: down-regulation of cyclic AMP (cAMP) relieving NLRP3 inhibition by cAMP. Acts as a regulator of proton-sensing receptor GPR68 in a seesaw manner: CASR-mediated signaling inhibits GPR68 signaling in response to extracellular calcium, while GPR68 inhibits CASR in presence of extracellular protons. The protein is Extracellular calcium-sensing receptor of Homo sapiens (Human).